A 75-amino-acid polypeptide reads, in one-letter code: Small ribosomal subunit protein bS16 (75 aa).

It belongs to the bacterial ribosomal protein bS16 family.

This chain is Small ribosomal subunit protein bS16, found in Campylobacter hominis (strain ATCC BAA-381 / DSM 21671 / CCUG 45161 / LMG 19568 / NCTC 13146 / CH001A).